A 921-amino-acid chain; its full sequence is Extended synaptotagmin-2 (921 aa).

Residues 1–103 are Cytoplasmic-facing; the sequence is MTANRDAALS…RPGGPENPGG (103 aa). Residues 1–103 form a disordered region; sequence MTANRDAALS…RPGGPENPGG (103 aa). The span at 58 to 75 shows a compositional bias: basic residues; it reads GARRRAKTARGLRGHRQR. Residues 104 to 124 traverse the membrane as a helical segment; it reads VLSVELPGLLAQLARSFALLL. Topologically, residues 125 to 127 are lumenal; sequence PVY. The helical transmembrane segment at 128–148 threads the bilayer; the sequence is ALGYLGLSFSWVLLALALLAW. The Cytoplasmic segment spans residues 149-921; the sequence is CRRSRGLKAL…EDGTRPQAMT (773 aa). Residues 191–370 enclose the SMP-LTD domain; sequence DTERAEWLNK…LPNRITVPLV (180 aa). C2 domains are found at residues 369 to 489 and 514 to 639; these read LVSE…DEWF and NLDK…QLSN. Residues K400, D401, D413, D460, E461, D462, D464, D466, and D467 each coordinate Ca(2+). The segment at 660–754 is disordered; sequence RERPPDHQHS…GHISVKEPTP (95 aa). A phosphoserine mark is found at S691 and S693. T705 bears the Phosphothreonine mark. Phosphoserine occurs at positions 736, 738, 739, 743, 748, 755, 758, and 761. A C2 3 domain is found at 786-908; the sequence is PLGQIQLTIR…ELAKGWTQWY (123 aa). Residues 833-840 are required for phosphatidylinositol 4,5-bisphosphate-dependent location at the cell membrane; the sequence is KRRSGRRK.

Belongs to the extended synaptotagmin family. As to quaternary structure, homodimer. Interacts with ESYT1 and ESYT3. Interacts with FGFR1 that has been activated by FGF1 binding. Interacts with the AP-2 complex; identified in a complex with the AP-2 complex and FGFR1. Widely expressed with high level in cerebellum.

It is found in the cell membrane. Its subcellular location is the endoplasmic reticulum membrane. Tethers the endoplasmic reticulum to the cell membrane and promotes the formation of appositions between the endoplasmic reticulum and the cell membrane. Binds glycerophospholipids in a barrel-like domain and may play a role in cellular lipid transport. Plays a role in FGF signaling via its role in the rapid internalization of FGFR1 that has been activated by FGF1 binding; this occurs most likely via the AP-2 complex. Promotes the localization of SACM1L at endoplasmic reticulum-plasma membrane contact sites (EPCS). The chain is Extended synaptotagmin-2 from Homo sapiens (Human).